The primary structure comprises 141 residues: Ly6/PLAUR domain-containing protein 1 (141 aa).

The first 20 residues, 1–20, serve as a signal peptide directing secretion; the sequence is MWVLGIAATFCGLFLLPGFA. Cystine bridges form between Cys-25/Cys-54, Cys-28/Cys-37, Cys-46/Cys-71, Cys-77/Cys-100, Cys-88/Cys-97, and Cys-101/Cys-106. A UPAR/Ly6 domain is found at 25–107; the sequence is CYQCEEFQLN…ISCCNTPLCN (83 aa). N-linked (GlcNAc...) asparagine glycosylation is present at Asn-45. Ser-117 carries GPI-anchor amidated serine lipidation. Residues 118-141 constitute a propeptide, removed in mature form; it reads ASALRPGLRTTILFLKLALFSAHC.

As to quaternary structure, interacts with CHRNA4 and nAChRs containing alpha-4:beta-2 (CHRNA4:CHRNB2) and alpha-7 (CHRNA7) subunits.

It localises to the cell membrane. Functionally, believed to act as a modulator of nicotinic acetylcholine receptors (nAChRs) activity. In vitro increases receptor desensitization and decreases affinity for ACh of alpha-4:beta-2-containing nAChRs. May play a role in the intracellular trafficking of alpha-4:beta-2 and alpha-7-containing nAChRs and may inhibit their expression at the cell surface. May be involved in the control of anxiety. This chain is Ly6/PLAUR domain-containing protein 1 (LYPD1), found in Homo sapiens (Human).